We begin with the raw amino-acid sequence, 685 residues long: ATP-dependent permease MDL1 (685 aa).

Polar residues predominate over residues 48 to 70; sequence FNSKSSTAPNTEANSNGSTNSQS. Residues 48 to 76 are disordered; that stretch reads FNSKSSTAPNTEANSNGSTNSQSDTKKPR. The N-linked (GlcNAc...) asparagine glycan is linked to N63. A helical membrane pass occupies residues 96-116; that stretch reads LIFFALICLVTTSATSMALPL. The ABC transmembrane type-1 domain maps to 97–407; that stretch reads IFFALICLVT…LGNFYTELMK (311 aa). The tract at residues 125-147 is disordered; the sequence is TKKDDDDDKDNDNDDKDDTQPSD. Residues 129–141 are compositionally biased toward acidic residues; sequence DDDDKDNDNDDKD. Residues 158 to 180 traverse the membrane as a helical segment; the sequence is FYSALGVLFIVSASTNFGRIYLL. A glycan (N-linked (GlcNAc...) asparagine) is linked at N239. The helical transmembrane segment at 266–282 threads the bilayer; sequence LCMSLIFPPLITMSWFY. Residue N336 is glycosylated (N-linked (GlcNAc...) asparagine). A run of 2 helical transmembrane segments spans residues 353-373 and 381-401; these read GFIG…LIGA and LSSF…LGNF. Positions 440 to 680 constitute an ABC transporter domain; that stretch reads IEFKGIDFTY…PNSQFNKLLK (241 aa). ATP is bound at residue 475–482; it reads GPSGSGKS. 2 N-linked (GlcNAc...) asparagine glycosylation sites follow: N553 and N576.

It belongs to the ABC transporter superfamily. ABCB family. Mitochondrial peptide exporter (TC 3.A.1.212) subfamily.

Its subcellular location is the membrane. The chain is ATP-dependent permease MDL1 (MDL1) from Candida albicans (Yeast).